The sequence spans 502 residues: MEFSVKSGSPEKQRSACIVVGVYEPRRLSGIAEQLDKISEGYISNLLRRGDLEGKPGQMLLLHHVPNVLSERVLLVGCGKERELDERQYKQIITKTINTLNETGSMEAVCFLTELHVKGRDTYWKVRQAVETTNSSLYCFDALKTRKGETRRPLRKLVFNVPTRRELTLGERAIEHGMAVSSGMHLCRDVANMPPNICNPAYLASQARQLAEIHENLHVSTVGEEQMAKLGMNSYLAVGRASANESIMTVMEYKGAVDSTEKPIVLIGKGLTFDSGGISLKPGEAMDEMKYDMGGAAGVIGTMKAICEMKLPINVVGILAGCENMPSGNAYRPGDILTTLSGQTVEVLNTDAEGRLVLCDVLTYVERFDPELVIDTATLTGACVIALGKHASGLFSSHNPLAHELLNAGEQSGDRAWRMPLWDEYQDMLDSPFADMTNLGGRPAGAITAACFLSRFAKKYNWAHLDVAGTAWNSGANKGSTGRPVPILTQFLINRAGVELGE.

Residues Lys269 and Asp274 each contribute to the Mn(2+) site. Residue Lys281 is part of the active site. Mn(2+) contacts are provided by Asp292, Asp351, and Glu353. Residue Arg355 is part of the active site.

This sequence belongs to the peptidase M17 family. Requires Mn(2+) as cofactor.

It is found in the cytoplasm. The catalysed reaction is Release of an N-terminal amino acid, Xaa-|-Yaa-, in which Xaa is preferably Leu, but may be other amino acids including Pro although not Arg or Lys, and Yaa may be Pro. Amino acid amides and methyl esters are also readily hydrolyzed, but rates on arylamides are exceedingly low.. It carries out the reaction Release of an N-terminal amino acid, preferentially leucine, but not glutamic or aspartic acids.. Functionally, presumably involved in the processing and regular turnover of intracellular proteins. Catalyzes the removal of unsubstituted N-terminal amino acids from various peptides. The polypeptide is Probable cytosol aminopeptidase 2 (pepA2) (Shewanella oneidensis (strain ATCC 700550 / JCM 31522 / CIP 106686 / LMG 19005 / NCIMB 14063 / MR-1)).